Consider the following 452-residue polypeptide: Bifunctional protein GlmU (452 aa).

Residues 1–226 (MSLDIVILAA…AMEVQGANDR (226 aa)) form a pyrophosphorylase region. Residues 8–11 (LAAG), lysine 22, glutamine 73, 78–79 (GT), 99–101 (YGD), glycine 136, glutamate 151, asparagine 166, and asparagine 224 each bind UDP-N-acetyl-alpha-D-glucosamine. Aspartate 101 provides a ligand contact to Mg(2+). Asparagine 224 serves as a coordination point for Mg(2+). The linker stretch occupies residues 227 to 247 (IQLAELERHYQLRAARRLMAQ). The N-acetyltransferase stretch occupies residues 248-452 (GVTLRDPARF…IDGWQRPTKK (205 aa)). Residues arginine 330 and lysine 348 each coordinate UDP-N-acetyl-alpha-D-glucosamine. Histidine 360 serves as the catalytic Proton acceptor. Residues tyrosine 363 and asparagine 374 each coordinate UDP-N-acetyl-alpha-D-glucosamine. Acetyl-CoA contacts are provided by residues alanine 377, 383 to 384 (NY), serine 402, alanine 420, and arginine 437.

In the N-terminal section; belongs to the N-acetylglucosamine-1-phosphate uridyltransferase family. This sequence in the C-terminal section; belongs to the transferase hexapeptide repeat family. Homotrimer. It depends on Mg(2+) as a cofactor.

The protein resides in the cytoplasm. The enzyme catalyses alpha-D-glucosamine 1-phosphate + acetyl-CoA = N-acetyl-alpha-D-glucosamine 1-phosphate + CoA + H(+). It catalyses the reaction N-acetyl-alpha-D-glucosamine 1-phosphate + UTP + H(+) = UDP-N-acetyl-alpha-D-glucosamine + diphosphate. It functions in the pathway nucleotide-sugar biosynthesis; UDP-N-acetyl-alpha-D-glucosamine biosynthesis; N-acetyl-alpha-D-glucosamine 1-phosphate from alpha-D-glucosamine 6-phosphate (route II): step 2/2. The protein operates within nucleotide-sugar biosynthesis; UDP-N-acetyl-alpha-D-glucosamine biosynthesis; UDP-N-acetyl-alpha-D-glucosamine from N-acetyl-alpha-D-glucosamine 1-phosphate: step 1/1. It participates in bacterial outer membrane biogenesis; LPS lipid A biosynthesis. Functionally, catalyzes the last two sequential reactions in the de novo biosynthetic pathway for UDP-N-acetylglucosamine (UDP-GlcNAc). The C-terminal domain catalyzes the transfer of acetyl group from acetyl coenzyme A to glucosamine-1-phosphate (GlcN-1-P) to produce N-acetylglucosamine-1-phosphate (GlcNAc-1-P), which is converted into UDP-GlcNAc by the transfer of uridine 5-monophosphate (from uridine 5-triphosphate), a reaction catalyzed by the N-terminal domain. This Stutzerimonas stutzeri (strain A1501) (Pseudomonas stutzeri) protein is Bifunctional protein GlmU.